Here is a 241-residue protein sequence, read N- to C-terminus: Methylthioribulose-1-phosphate dehydratase (241 aa).

The tract at residues 1–20 is disordered; the sequence is MSAIKDERNNDHLVQSHDPE. C100 is a binding site for substrate. Zn(2+) is bound by residues H117 and H119. Catalysis depends on E146, which acts as the Proton donor/acceptor. A Zn(2+)-binding site is contributed by H202.

Belongs to the aldolase class II family. MtnB subfamily. Zn(2+) serves as cofactor.

The protein localises to the cytoplasm. It catalyses the reaction 5-(methylsulfanyl)-D-ribulose 1-phosphate = 5-methylsulfanyl-2,3-dioxopentyl phosphate + H2O. It participates in amino-acid biosynthesis; L-methionine biosynthesis via salvage pathway; L-methionine from S-methyl-5-thio-alpha-D-ribose 1-phosphate: step 2/6. In terms of biological role, catalyzes the dehydration of methylthioribulose-1-phosphate (MTRu-1-P) into 2,3-diketo-5-methylthiopentyl-1-phosphate (DK-MTP-1-P). The protein is Methylthioribulose-1-phosphate dehydratase of Blastomyces gilchristii (strain SLH14081) (Blastomyces dermatitidis).